The chain runs to 176 residues: Peptidoglycan-associated lipoprotein (176 aa).

Positions 1-21 (MKAGSFYKLGLLVASAVLVAA) are cleaved as a signal peptide. A lipid anchor (N-palmitoyl cysteine) is attached at C22. C22 carries S-diacylglycerol cysteine lipidation. The 117-residue stretch at 60-176 (YTTQAPHNQL…RVEFIYEATR (117 aa)) folds into the OmpA-like domain.

It belongs to the Pal lipoprotein family. In terms of assembly, the Tol-Pal system is composed of five core proteins: the inner membrane proteins TolA, TolQ and TolR, the periplasmic protein TolB and the outer membrane protein Pal. They form a network linking the inner and outer membranes and the peptidoglycan layer.

The protein resides in the cell outer membrane. Its function is as follows. Part of the Tol-Pal system, which plays a role in outer membrane invagination during cell division and is important for maintaining outer membrane integrity. Very strongly associated with the peptidoglycan. The sequence is that of Peptidoglycan-associated lipoprotein from Legionella pneumophila.